Consider the following 149-residue polypeptide: Ribonuclease P protein component (149 aa).

A disordered region spans residues 123–149; the sequence is GTKVSRRSNGALHDAAPSSQPDPTVSG. Positions 139-149 are enriched in polar residues; sequence PSSQPDPTVSG.

It belongs to the RnpA family. As to quaternary structure, consists of a catalytic RNA component (M1 or rnpB) and a protein subunit.

It catalyses the reaction Endonucleolytic cleavage of RNA, removing 5'-extranucleotides from tRNA precursor.. RNaseP catalyzes the removal of the 5'-leader sequence from pre-tRNA to produce the mature 5'-terminus. It can also cleave other RNA substrates such as 4.5S RNA. The protein component plays an auxiliary but essential role in vivo by binding to the 5'-leader sequence and broadening the substrate specificity of the ribozyme. The protein is Ribonuclease P protein component of Caulobacter vibrioides (strain ATCC 19089 / CIP 103742 / CB 15) (Caulobacter crescentus).